We begin with the raw amino-acid sequence, 35 residues long: Malate dehydrogenase, mitochondrial (35 aa).

Asparagine 7 lines the NAD(+) pocket. Position 23 (arginine 23) interacts with substrate.

Belongs to the LDH/MDH superfamily. MDH type 1 family. As to quaternary structure, homodimer.

It localises to the mitochondrion matrix. It carries out the reaction (S)-malate + NAD(+) = oxaloacetate + NADH + H(+). The protein is Malate dehydrogenase, mitochondrial of Capsicum annuum var. annuum (Red pepper).